Reading from the N-terminus, the 505-residue chain is Maturase K (505 aa).

This sequence belongs to the intron maturase 2 family. MatK subfamily.

Its subcellular location is the plastid. It is found in the chloroplast. Functionally, usually encoded in the trnK tRNA gene intron. Probably assists in splicing its own and other chloroplast group II introns. The protein is Maturase K of Allamanda cathartica (Yellow allamanda).